The primary structure comprises 470 residues: Nuclear receptor ROR-beta (470 aa).

The segment at residues 18–93 is a DNA-binding region (nuclear receptor); the sequence is VIPCKICGDK…LGMSRDAVKF (76 aa). 2 NR C4-type zinc fingers span residues 21–41 and 57–81; these read CKIC…CEGC and CPRQ…LQKC. The span at 104–117 shows a compositional bias: basic and acidic residues; it reads LYAEVQKHQQRLQE. Residues 104–127 are disordered; that stretch reads LYAEVQKHQQRLQEQRQQQSGEAE. An NR LBD domain is found at 222–460; that stretch reads EIDRIAQNII…TLFPPLYKEL (239 aa). Positions 456–461 match the AF-2 motif; it reads LYKELF.

This sequence belongs to the nuclear hormone receptor family. NR1 subfamily. As to quaternary structure, monomer. Interacts with CRX. Isoform 2 expressed with circadian rhythm in eye and pineal gland. Isoform 1 expressed in retina cortex, thalamus, and hypothalamus.

It localises to the nucleus. Its subcellular location is the nucleoplasm. Functionally, nuclear receptor that binds DNA as a monomer to ROR response elements (RORE) containing a single core motif half-site 5'-AGGTCA-3' preceded by a short A-T-rich sequence. Considered to have intrinsic transcriptional activity, have some natural ligands such as all-trans retinoic acid (ATRA) and other retinoids which act as inverse agonists repressing the transcriptional activity. Required for normal postnatal development of rod and cone photoreceptor cells. Modulates rod photoreceptors differentiation at least by inducing the transcription factor NRL-mediated pathway. In cone photoreceptor cells, regulates transcription of OPN1SW. Involved in the regulation of the period length and stability of the circadian rhythm. May control cytoarchitectural patterning of neocortical neurons during development. May act in a dose-dependent manner to regulate barrel formation upon innervation of layer IV neurons by thalamocortical axons. May play a role in the suppression of osteoblastic differentiation through the inhibition of RUNX2 transcriptional activity. In terms of biological role, critical for hindlimb motor control and for the differentiation of amacrine and horizontal cells in the retina. Regulates the expression of PTF1A synergistically with FOXN4. The sequence is that of Nuclear receptor ROR-beta (Rorb) from Rattus norvegicus (Rat).